The following is a 113-amino-acid chain: U11-theraphotoxin-Hhn1e (113 aa).

A signal peptide spans 1–21 (MNTVRVTFLLVFVLAVSLGQA). A propeptide spanning residues 22–74 (DKDENRMEMLEKTEQGKSYLDFAENLLLQKLEELEARLLEEDSEESRNSRQKR) is cleaved from the precursor. The segment covering 60 to 69 (LEEDSEESRN) has biased composition (basic and acidic residues). The interval 60-87 (LEEDSEESRNSRQKRCIGEGVPRDENDP) is disordered. 2 disulfides stabilise this stretch: C75-C90 and C89-C110.

The protein belongs to the neurotoxin 14 (magi-1) family. 01 (HNTX-16) subfamily. As to expression, expressed by the venom gland.

It localises to the secreted. Probable ion channel inhibitor. In Cyriopagopus hainanus (Chinese bird spider), this protein is U11-theraphotoxin-Hhn1e.